Consider the following 468-residue polypeptide: WD repeat-containing protein 55 homolog (468 aa).

Positions 1-107 are disordered; that stretch reads MRNFNSPKFG…VPKRVIDDYD (107 aa). 3 stretches are compositionally biased toward acidic residues: residues 15–26, 41–58, and 67–91; these read DDSDDDDFDSGT, PITE…EYNP, and SDDE…DGED. WD repeat units lie at residues 134-173, 178-217, 221-259, 262-301, 304-343, and 388-427; these read KTED…CTIV, THTK…LKRF, AHEE…PVFK, EVED…MYVQ, PYEE…YHCD, and QHSL…EFDD.

The protein belongs to the WD repeat WDR55 family.

The protein is WD repeat-containing protein 55 homolog of Aedes aegypti (Yellowfever mosquito).